The chain runs to 76 residues: Large ribosomal subunit protein uL29 (76 aa).

Belongs to the universal ribosomal protein uL29 family.

This is Large ribosomal subunit protein uL29 from Corynebacterium kroppenstedtii (strain DSM 44385 / JCM 11950 / CIP 105744 / CCUG 35717).